A 194-amino-acid polypeptide reads, in one-letter code: dITP/XTP pyrophosphatase (194 aa).

8–13 is a binding site for substrate; that stretch reads TGNPGK. Mg(2+) is bound by residues E38 and D67. The active-site Proton acceptor is the D67. Residues S68, 146-149, K169, and 174-175 contribute to the substrate site; these read FGYD and HR.

It belongs to the HAM1 NTPase family. In terms of assembly, homodimer. Mg(2+) serves as cofactor.

The enzyme catalyses XTP + H2O = XMP + diphosphate + H(+). It carries out the reaction dITP + H2O = dIMP + diphosphate + H(+). It catalyses the reaction ITP + H2O = IMP + diphosphate + H(+). Functionally, pyrophosphatase that catalyzes the hydrolysis of nucleoside triphosphates to their monophosphate derivatives, with a high preference for the non-canonical purine nucleotides XTP (xanthosine triphosphate), dITP (deoxyinosine triphosphate) and ITP. Seems to function as a house-cleaning enzyme that removes non-canonical purine nucleotides from the nucleotide pool, thus preventing their incorporation into DNA/RNA and avoiding chromosomal lesions. The protein is dITP/XTP pyrophosphatase of Synechocystis sp. (strain ATCC 27184 / PCC 6803 / Kazusa).